The following is a 1042-amino-acid chain: Serine/threonine-protein kinase LATS2 (1042 aa).

The disordered stretch occupies residues 23–44; it reads REGLKQPSKASTQGLLVGPNSD. Residues 30–44 are compositionally biased toward polar residues; sequence SKASTQGLLVGPNSD. Ser-82 carries the post-translational modification Phosphoserine; by AURKA. The UBA domain maps to 97 to 138; sequence EVNRQMLQELVNAGCDQEMAGRALKQTGSRSIEAALEYISKM. The interval 100–140 is interaction with ubiquitinated AMOTL2; it reads RQMLQELVNAGCDQEMAGRALKQTGSRSIEAALEYISKMGY. The segment at 237 to 282 is disordered; that stretch reads HFPGTHYGRGHLLSEQPGYGVQRSSSFQNKTPPDAYSSMAKAQGGP. The segment covering 258-267 has biased composition (polar residues); that stretch reads QRSSSFQNKT. Residue Thr-267 is modified to Phosphothreonine. Residue Ser-362 is modified to Phosphoserine. 3 disordered regions span residues 378–399, 442–481, and 501–550; these read RAGPSRTNSFNNPQPEPSLPAP, PATESLETKEGSAGPHPLDVDYGGSERRCPPPPYPKHLLL, and QSLR…KRES. A PPxY motif motif is present at residues 472–475; sequence PPPY. Positions 507–530 are enriched in basic and acidic residues; the sequence is TEQDRSDKSHKGAKGDKAGRDKKQ. Ser-534 is modified (phosphoserine). The segment covering 541–550 has biased composition (basic and acidic residues); sequence NSRDEEKRES. Positions 626–931 constitute a Protein kinase domain; sequence FVKIKTLGIG…ADDLKAHPFF (306 aa). ATP-binding positions include 632–640 and Lys-655; that span reads LGIGAFGEV. Asp-749 functions as the Proton acceptor in the catalytic mechanism. The region spanning 932-1010 is the AGC-kinase C-terminal domain; the sequence is NTIDFSRDIR…RRFFDDNGYP (79 aa). At Thr-999 the chain carries Phosphothreonine. The interval 1014 to 1042 is disordered; sequence PKPSEPAESADPGDADLEGAAEGCQPVYV.

Belongs to the protein kinase superfamily. AGC Ser/Thr protein kinase family. In terms of assembly, interacts with and is phosphorylated by AURKA. Binds to AR. Interacts with AJUBA during mitosis and this complex regulates organization of the spindle apparatus through recruitment of gamma-tubulin to the centrosome. Interacts (via PPxY motif) with YAP1 (via WW domains). Interacts with MOB1A and MOB1B. Interacts with LIMD1, WTIP and AJUBA. Interacts with SNAI1. Interacts with WWC1, WWC2 and WWC3 (via their WW domains). Interacts (via UBA domain) with ubiquitinated AMOTL2; the interaction promotes LATS2 phosphorylation of YAP1. Requires Mg(2+) as cofactor. Post-translationally, autophosphorylated and phosphorylated during M-phase and the G1/S-phase of the cell cycle. Phosphorylated and activated by STK3/MST2. Phosphorylated by MAP4Ks; in parallel to STK3/MST2 and resulting to its activation. Phosphorylation by NUAK2 may regulate its activity in phosphorylation and inactivation YAP1. As to expression, expressed at high levels in ovary and testis and at lower levels in all other tissues examined.

Its subcellular location is the cytoplasm. It is found in the cytoskeleton. The protein localises to the microtubule organizing center. The protein resides in the centrosome. It localises to the spindle pole. Its subcellular location is the nucleus. The enzyme catalyses L-seryl-[protein] + ATP = O-phospho-L-seryl-[protein] + ADP + H(+). The catalysed reaction is L-threonyl-[protein] + ATP = O-phospho-L-threonyl-[protein] + ADP + H(+). Its function is as follows. Negative regulator of YAP1 in the Hippo signaling pathway that plays a pivotal role in organ size control and tumor suppression by restricting proliferation and promoting apoptosis. The core of this pathway is composed of a kinase cascade wherein STK3/MST2 and STK4/MST1, in complex with its regulatory protein SAV1, phosphorylates and activates LATS1/2 in complex with its regulatory protein MOB1, which in turn phosphorylates and inactivates YAP1 oncoprotein and WWTR1/TAZ. Phosphorylation of YAP1 by LATS2 inhibits its translocation into the nucleus to regulate cellular genes important for cell proliferation, cell death, and cell migration. Also phosphorylates YAP1 in response to cell contact inhibition-driven WWP1 ubiquitination of AMOTL2, which results in LATS2 activation. Acts as a tumor suppressor which plays a critical role in centrosome duplication, maintenance of mitotic fidelity and genomic stability. Negatively regulates G1/S transition by down-regulating cyclin E/CDK2 kinase activity. Negative regulator of the androgen receptor. Phosphorylates SNAI1 in the nucleus leading to its nuclear retention and stabilization, which enhances its epithelial-mesenchymal transition and tumor cell invasion/migration activities. This tumor-promoting activity is independent of its effects upon YAP1 or WWTR1/TAZ. Acts as an activator of the NLRP3 inflammasome by mediating phosphorylation of 'Ser-265' of NLRP3 following NLRP3 palmitoylation, promoting NLRP3 activation by NEK7. The polypeptide is Serine/threonine-protein kinase LATS2 (Mus musculus (Mouse)).